Consider the following 354-residue polypeptide: Chorismate synthase (354 aa).

Positions 48 and 54 each coordinate NADP(+). Residues Arg125–Ser127, Asn238–Ala239, Gly278, Lys293–Ser297, and Arg319 contribute to the FMN site.

This sequence belongs to the chorismate synthase family. Homotetramer. The cofactor is FMNH2.

It catalyses the reaction 5-O-(1-carboxyvinyl)-3-phosphoshikimate = chorismate + phosphate. Its pathway is metabolic intermediate biosynthesis; chorismate biosynthesis; chorismate from D-erythrose 4-phosphate and phosphoenolpyruvate: step 7/7. Functionally, catalyzes the anti-1,4-elimination of the C-3 phosphate and the C-6 proR hydrogen from 5-enolpyruvylshikimate-3-phosphate (EPSP) to yield chorismate, which is the branch point compound that serves as the starting substrate for the three terminal pathways of aromatic amino acid biosynthesis. This reaction introduces a second double bond into the aromatic ring system. This Buchnera aphidicola subsp. Acyrthosiphon pisum (strain 5A) protein is Chorismate synthase.